A 542-amino-acid polypeptide reads, in one-letter code: 2,3-bisphosphoglycerate-independent phosphoglycerate mutase (542 aa).

Positions 13 and 63 each coordinate Mn(2+). Ser63 acts as the Phosphoserine intermediate in catalysis. Substrate contacts are provided by residues His124, 154–155 (RD), Arg186, Arg192, 263–266 (RADR), and Lys357. Positions 424, 428, 465, 466, and 484 each coordinate Mn(2+).

Belongs to the BPG-independent phosphoglycerate mutase family. As to quaternary structure, monomer. The cofactor is Mn(2+).

The enzyme catalyses (2R)-2-phosphoglycerate = (2R)-3-phosphoglycerate. Its pathway is carbohydrate degradation; glycolysis; pyruvate from D-glyceraldehyde 3-phosphate: step 3/5. Functionally, catalyzes the interconversion of 2-phosphoglycerate and 3-phosphoglycerate. The polypeptide is 2,3-bisphosphoglycerate-independent phosphoglycerate mutase (Herpetosiphon aurantiacus (strain ATCC 23779 / DSM 785 / 114-95)).